The primary structure comprises 282 residues: Hydroxyethylthiazole kinase 2 (282 aa).

Met-44 is a substrate binding site. Residues Arg-120 and Ser-179 each contribute to the ATP site. Gly-206 provides a ligand contact to substrate.

The protein belongs to the Thz kinase family. Mg(2+) serves as cofactor.

The enzyme catalyses 5-(2-hydroxyethyl)-4-methylthiazole + ATP = 4-methyl-5-(2-phosphooxyethyl)-thiazole + ADP + H(+). It functions in the pathway cofactor biosynthesis; thiamine diphosphate biosynthesis; 4-methyl-5-(2-phosphoethyl)-thiazole from 5-(2-hydroxyethyl)-4-methylthiazole: step 1/1. Functionally, catalyzes the phosphorylation of the hydroxyl group of 4-methyl-5-beta-hydroxyethylthiazole (THZ). The protein is Hydroxyethylthiazole kinase 2 of Methanosphaera stadtmanae (strain ATCC 43021 / DSM 3091 / JCM 11832 / MCB-3).